The following is a 110-amino-acid chain: Small EDRK-rich factor 1 (110 aa).

The segment covering 1–30 (MARGNQRELARQKNMKKTQEISKGKRKEDS) has biased composition (basic and acidic residues). The segment at 1-61 (MARGNQRELA…GPHLPLKAPR (61 aa)) is disordered. A required for SNCA binding region spans residues 11-17 (RQKNMKK). The segment covering 34–50 (SQRKQSSGGQKSESKMS) has biased composition (low complexity).

Belongs to the SERF family. As to quaternary structure, interacts with SNCA; this interaction promotes the aggregation of SNCA. In terms of tissue distribution, isoform Long is predominantly expressed in heart, brain and skeletal muscle. Isoform Short and Isoform Long are expressed throughout the central nervous system, including spinal cord.

It localises to the cytoplasm. The protein localises to the cytosol. Its subcellular location is the nucleus. In terms of biological role, positive regulator of amyloid protein aggregation and proteotoxicity. Induces conformational changes in amyloid proteins, such as APP, HTT, and SNCA, driving them into compact formations preceding the formation of aggregates. In Homo sapiens (Human), this protein is Small EDRK-rich factor 1 (SERF1A).